The primary structure comprises 241 residues: ATP synthase subunit a (241 aa).

A run of 5 helical transmembrane segments spans residues glycine 30–glycine 50, phenylalanine 91–tryptophan 111, isoleucine 128–serine 148, leucine 193–leucine 213, and glycine 214–glycine 234.

Belongs to the ATPase A chain family. As to quaternary structure, F-type ATPases have 2 components, CF(1) - the catalytic core - and CF(0) - the membrane proton channel. CF(1) has five subunits: alpha(3), beta(3), gamma(1), delta(1), epsilon(1). CF(0) has four main subunits: a, b, b' and c.

The protein localises to the cellular thylakoid membrane. Functionally, key component of the proton channel; it plays a direct role in the translocation of protons across the membrane. This is ATP synthase subunit a from Prochlorococcus marinus (strain SARG / CCMP1375 / SS120).